Reading from the N-terminus, the 837-residue chain is Protein translocase subunit SecA (837 aa).

ATP is bound by residues Q85, 103–107, and D493; that span reads GEGKT. Positions 821, 823, 832, and 833 each coordinate Zn(2+).

This sequence belongs to the SecA family. As to quaternary structure, monomer and homodimer. Part of the essential Sec protein translocation apparatus which comprises SecA, SecYEG and auxiliary proteins SecDF. Other proteins may also be involved. Zn(2+) serves as cofactor.

It is found in the cell membrane. It localises to the cytoplasm. It catalyses the reaction ATP + H2O + cellular proteinSide 1 = ADP + phosphate + cellular proteinSide 2.. In terms of biological role, part of the Sec protein translocase complex. Interacts with the SecYEG preprotein conducting channel. Has a central role in coupling the hydrolysis of ATP to the transfer of proteins into and across the cell membrane, serving as an ATP-driven molecular motor driving the stepwise translocation of polypeptide chains across the membrane. The protein is Protein translocase subunit SecA of Streptococcus pneumoniae (strain ATCC BAA-255 / R6).